The primary structure comprises 257 residues: Thiazole synthase (257 aa).

The Schiff-base intermediate with DXP role is filled by Lys-100. Residues Gly-161, 187–188 (AG), and 209–210 (NT) contribute to the 1-deoxy-D-xylulose 5-phosphate site.

Belongs to the ThiG family. In terms of assembly, homotetramer. Forms heterodimers with either ThiH or ThiS.

It localises to the cytoplasm. It catalyses the reaction [ThiS sulfur-carrier protein]-C-terminal-Gly-aminoethanethioate + 2-iminoacetate + 1-deoxy-D-xylulose 5-phosphate = [ThiS sulfur-carrier protein]-C-terminal Gly-Gly + 2-[(2R,5Z)-2-carboxy-4-methylthiazol-5(2H)-ylidene]ethyl phosphate + 2 H2O + H(+). The protein operates within cofactor biosynthesis; thiamine diphosphate biosynthesis. Catalyzes the rearrangement of 1-deoxy-D-xylulose 5-phosphate (DXP) to produce the thiazole phosphate moiety of thiamine. Sulfur is provided by the thiocarboxylate moiety of the carrier protein ThiS. In vitro, sulfur can be provided by H(2)S. The polypeptide is Thiazole synthase (Zymomonas mobilis subsp. mobilis (strain ATCC 31821 / ZM4 / CP4)).